The sequence spans 737 residues: Zinc finger protein 184 (737 aa).

The 72-residue stretch at 28 to 99 folds into the KRAB domain; sequence VTFKDVVVNF…DSCIPVGPLE (72 aa). Position 117 is a phosphoserine (Ser-117). Lys-185 participates in a covalent cross-link: Glycyl lysine isopeptide (Lys-Gly) (interchain with G-Cter in SUMO2). 17 consecutive C2H2-type zinc fingers follow at residues 201-223, 229-251, 257-279, 285-307, 313-335, 341-363, 369-391, 397-419, 425-447, 453-475, 481-503, 509-531, 537-559, 565-587, 593-615, 621-643, and 649-671; these read CKCN…QRTH, YKCN…QRIH, YKCD…QRIH, YTCT…QKIH, FKCE…QKIH, YKCN…HMIH, YECN…QKTH, YDCA…LKIH, YKCS…RRIH, FECS…QKTH, YECK…ERIH, YQCH…KKIH, YKCN…KRIH, YACP…QKTH, YQCN…QRIH, and YKCS…RSTH. The C2H2-type 18; degenerate zinc finger occupies 677-698; sequence YNSECPQTFSQSTYLTQHQKIH. The C2H2-type 19 zinc-finger motif lies at 704-726; it reads LGCEDCEKAFQCHSALTKHQRLH.

The protein belongs to the krueppel C2H2-type zinc-finger protein family.

The protein resides in the nucleus. Functionally, may be involved in transcriptional regulation. This chain is Zinc finger protein 184 (Zfp184), found in Mus musculus (Mouse).